A 484-amino-acid chain; its full sequence is Poly(A) RNA polymerase GLD2 (484 aa).

Residues serine 62 and serine 69 each carry the phosphoserine modification. A disordered region spans residues 72-97 (FRGRKRLSDEKNLPLDGKRQRFHSPH). Positions 76 to 92 (KRLSDEKNLPLDGKRQR) match the Nuclear localization signal motif. Residues 77 to 90 (RLSDEKNLPLDGKR) are compositionally biased toward basic and acidic residues. Serine 95 bears the Phosphoserine mark. The Mg(2+) site is built by aspartate 213 and aspartate 215. The region spanning 386-440 (NLGDLLLGFLKYYATEFDWNSQMISVREAKAIPRPDGIEWRNKYICVEEPFDGTN) is the PAP-associated domain.

This sequence belongs to the DNA polymerase type-B-like family. GLD2 subfamily. As to quaternary structure, interacts with CPEB1, CPEB2, CPSF1 and PABPC1. Interacts with QKI isoform QKI7; promoting recruitment to miRNA miR-122 and miR-122 stabilization. It depends on Mg(2+) as a cofactor. The cofactor is Mn(2+). In terms of tissue distribution, expressed in brain. Within brain, it is expressed in cerebellum, hippocampus and medulla.

The protein resides in the cytoplasm. Its subcellular location is the nucleus. It carries out the reaction RNA(n) + ATP = RNA(n)-3'-adenine ribonucleotide + diphosphate. Functionally, cytoplasmic poly(A) RNA polymerase that adds successive AMP monomers to the 3'-end of specific RNAs, forming a poly(A) tail. In contrast to the canonical nuclear poly(A) RNA polymerase, it only adds poly(A) to selected cytoplasmic mRNAs. Does not play a role in replication-dependent histone mRNA degradation. Adds a single nucleotide to the 3' end of specific miRNAs, monoadenylation stabilizes and prolongs the activity of some but not all miRNAs. The polypeptide is Poly(A) RNA polymerase GLD2 (Homo sapiens (Human)).